The primary structure comprises 56 residues: Male determiner protein Yob (56 aa).

Its function is as follows. Male determiner protein (M-factor) that controls male somatic sexual differentiation. Acts as a dominant factor that regulates the mRNA splicing of doublesex (dsx) transcripts and promotes expression of male splice forms of dsx. The chain is Male determiner protein Yob from Anopheles gambiae (African malaria mosquito).